The sequence spans 1836 residues: InaD-like protein (1836 aa).

An L27 domain is found at 1-65; that stretch reads MPENPAAEKM…SIKQLKGQLS (65 aa). PDZ domains are found at residues 134-221, 248-328, and 365-453; these read YIDI…AREV, DVEL…ARDP, and NVEL…VRRK. Phosphoserine is present on residues Ser-455, Ser-459, and Ser-482. The segment covering 456–466 has biased composition (polar residues); it reads LSASPFEQPSS. The segment at 456 to 492 is disordered; the sequence is LSASPFEQPSSREAVAEPPEVPELTGSLKPETNSRME. Residues 555 to 641 form the PDZ 4 domain; sequence DEELQKYSKL…PFTLVCCRRL (87 aa). Ser-647 carries the post-translational modification Phosphoserine. PDZ domains lie at 687–773 and 1074–1166; these read TVEL…ICKP and PRIV…VVQS. Over residues 1173–1191 the composition is skewed to polar residues; sequence VIPSVNNKGKTPPQNQDQN. The segment at 1173-1232 is disordered; sequence VIPSVNNKGKTPPQNQDQNTQEKKAKRHGTAPPPMKLPPPYRAPSADTEESEEDSALTDK. Residues 1203-1214 show a composition bias toward pro residues; the sequence is APPPMKLPPPYR. The residue at position 1217 (Ser-1217) is a Phosphoserine. Residues 1219-1228 are compositionally biased toward acidic residues; it reads DTEESEEDSA. The 84-residue stretch at 1245-1328 folds into the PDZ 7 domain; that stretch reads LHIIELEKDK…PTRVKLVFIR (84 aa). The interval 1341–1448 is disordered; sequence FPVPSHSPSP…ADVTGSGNFQ (108 aa). The segment covering 1372–1383 has biased composition (basic and acidic residues); that stretch reads PLPERESSKPED. Polar residues-rich tracts occupy residues 1415–1426 and 1434–1448; these read YSAQVSSSSQEI and CQSTHADVTGSGNFQ. 2 consecutive PDZ domains span residues 1472-1555 and 1568-1650; these read EMII…VIYR and VFLV…EIGR. Position 1545 is a phosphothreonine (Thr-1545). The disordered stretch occupies residues 1657–1678; sequence ASSRKTSQNSQGDQHSAHSSCR. The PDZ 10 domain maps to 1709-1795; the sequence is PRTVEIIREL…FGRIILQVVA (87 aa). The tract at residues 1813-1836 is disordered; that stretch reads SQLGSPTADRHPQDPEELLQRTAD.

As to quaternary structure, forms a ternary complex with PALS1 and CRB1. Component of a complex whose core is composed of ARHGAP17, AMOT, PALS1, INADL/PATJ and PARD3/PAR3. Forms a heterotrimeric complex composed of MMP5, LIN7B and PATJ; the N-terminal L27 domain of PALS1 interacts with the L27 domain of PATJ and the C-terminal L27 domain of PALS1 interacts with the L27 domain of LIN7B. Component of a complex composed of CRB3, PALS1 and PATJ. As part of the Crumbs complex; interacts with WWP1, the interaction is enhanced by AMOTL2 and facilitates WWP1 localization to the plasma membrane. The Crumbs complex promotes monoubiquitination of AMOTL2 by WWP1, which activates the Hippo signaling pathway. Interacts (via N-terminus) with PALS1/PALS (via PDZ domain). Interacts with TJP3/ZO-3 and CLDN1/claudin-1. Interacts with ASIC3, KCNJ10, KCNJ15, GRIN2A, GRIN2B, GRIN2C, GRIN2D, NLGN2, and HTR2A. Interacts with MPP7. Directly interacts with HTR4. Interacts (via PDZ domain 8) with WWC1 (via the ADDV motif). Interacts with SLC6A4. Interacts (via C-terminus) with ARHGEF18. Interacts with NPHP1. Interacts with PARD3/PAR3. Interacts (via PDZ1-6 domains) with TJP1/ZO1; the interaction is required for attachment and extension of TJP1/ZO1 condensates along the apical cell interface. In terms of tissue distribution, abundantly expressed in germ cells, also expressed in testes and seminiferous tubules, with faint expression in Sertoli cells (at protein level).

The protein localises to the cell junction. It is found in the tight junction. It localises to the apical cell membrane. The protein resides in the cytoplasm. Its subcellular location is the perinuclear region. Functionally, scaffolding protein that facilitates the localization of proteins to the cell membrane. Required for the correct formation of tight junctions and epithelial apico-basal polarity. Acts (via its L27 domain) as an apical connector and elongation factor for multistranded TJP1/ZO1 condensates that form a tight junction belt, thereby required for the formation of the tight junction-mediated cell barrier. Positively regulates epithelial cell microtubule elongation and cell migration, possibly via facilitating localization of PRKCI/aPKC and PAR3D/PAR3 at the leading edge of migrating cells. Plays a role in the correct reorientation of the microtubule-organizing center during epithelial migration. May regulate the surface expression and/or function of ASIC3 in sensory neurons. May recruit ARHGEF18 to apical cell-cell boundaries. This chain is InaD-like protein, found in Rattus norvegicus (Rat).